We begin with the raw amino-acid sequence, 559 residues long: Formate--tetrahydrofolate ligase (559 aa).

68-75 is a binding site for ATP; that stretch reads TPAGEGKT.

It belongs to the formate--tetrahydrofolate ligase family. As to quaternary structure, homotetramer.

It carries out the reaction (6S)-5,6,7,8-tetrahydrofolate + formate + ATP = (6R)-10-formyltetrahydrofolate + ADP + phosphate. The protein operates within one-carbon metabolism; tetrahydrofolate interconversion. The polypeptide is Formate--tetrahydrofolate ligase (Moorella thermoacetica (Clostridium thermoaceticum)).